The sequence spans 310 residues: Acetyl-coenzyme A carboxylase carboxyl transferase subunit alpha (310 aa).

Residues 31–285 (SFERELRIIN…KQKILRRLKQ (255 aa)) enclose the CoA carboxyltransferase C-terminal domain.

It belongs to the AccA family. Acetyl-CoA carboxylase is a heterohexamer composed of biotin carboxyl carrier protein (accB), biotin carboxylase (accC) and two subunits each of ACCase subunit alpha (accA) and ACCase subunit beta (accD).

It is found in the plastid. Its subcellular location is the chloroplast. It catalyses the reaction N(6)-carboxybiotinyl-L-lysyl-[protein] + acetyl-CoA = N(6)-biotinyl-L-lysyl-[protein] + malonyl-CoA. It functions in the pathway lipid metabolism; malonyl-CoA biosynthesis; malonyl-CoA from acetyl-CoA: step 1/1. Functionally, component of the acetyl coenzyme A carboxylase (ACC) complex. First, biotin carboxylase catalyzes the carboxylation of biotin on its carrier protein (BCCP) and then the CO(2) group is transferred by the carboxyltransferase to acetyl-CoA to form malonyl-CoA. In Cyanidioschyzon merolae (strain NIES-3377 / 10D) (Unicellular red alga), this protein is Acetyl-coenzyme A carboxylase carboxyl transferase subunit alpha.